The sequence spans 321 residues: Ribonuclease Z (321 aa).

Zn(2+)-binding residues include histidine 62, histidine 64, aspartate 66, histidine 67, histidine 139, aspartate 209, and histidine 268. The Proton acceptor role is filled by aspartate 66.

It belongs to the RNase Z family. As to quaternary structure, homodimer. Requires Zn(2+) as cofactor.

The enzyme catalyses Endonucleolytic cleavage of RNA, removing extra 3' nucleotides from tRNA precursor, generating 3' termini of tRNAs. A 3'-hydroxy group is left at the tRNA terminus and a 5'-phosphoryl group is left at the trailer molecule.. Zinc phosphodiesterase, which displays some tRNA 3'-processing endonuclease activity. Probably involved in tRNA maturation, by removing a 3'-trailer from precursor tRNA. This chain is Ribonuclease Z, found in Pseudomonas putida (strain W619).